Consider the following 267-residue polypeptide: Small ribosomal subunit protein uS2 (267 aa).

The interval 247 to 267 (LEDDILEDVEDEEEGDPEQGE) is disordered.

This sequence belongs to the universal ribosomal protein uS2 family.

This is Small ribosomal subunit protein uS2 from Synechococcus sp. (strain JA-3-3Ab) (Cyanobacteria bacterium Yellowstone A-Prime).